We begin with the raw amino-acid sequence, 399 residues long: Methylthioribose kinase (399 aa).

ATP-binding positions include asparagine 40, lysine 57, and 111 to 113 (EDL). Residue aspartate 229 participates in substrate binding. Residue 246 to 248 (DAE) coordinates ATP. Arginine 344 is a binding site for substrate.

This sequence belongs to the methylthioribose kinase family. In terms of assembly, homodimer.

The enzyme catalyses 5-(methylsulfanyl)-D-ribose + ATP = 5-(methylsulfanyl)-alpha-D-ribose 1-phosphate + ADP + H(+). Its pathway is amino-acid biosynthesis; L-methionine biosynthesis via salvage pathway; S-methyl-5-thio-alpha-D-ribose 1-phosphate from S-methyl-5'-thioadenosine (hydrolase route): step 2/2. Functionally, catalyzes the phosphorylation of methylthioribose into methylthioribose-1-phosphate. The polypeptide is Methylthioribose kinase (Klebsiella pneumoniae subsp. pneumoniae (strain ATCC 700721 / MGH 78578)).